Consider the following 486-residue polypeptide: Protein nucleotidyltransferase YdiU (486 aa).

The ATP site is built by Gly-90, Gly-92, Arg-93, Lys-113, Asp-125, Gly-126, Arg-176, and Arg-183. Asp-252 acts as the Proton acceptor in catalysis. The Mg(2+) site is built by Asn-253 and Asp-262. Position 262 (Asp-262) interacts with ATP.

This sequence belongs to the SELO family. It depends on Mg(2+) as a cofactor. Requires Mn(2+) as cofactor.

It catalyses the reaction L-seryl-[protein] + ATP = 3-O-(5'-adenylyl)-L-seryl-[protein] + diphosphate. It carries out the reaction L-threonyl-[protein] + ATP = 3-O-(5'-adenylyl)-L-threonyl-[protein] + diphosphate. The enzyme catalyses L-tyrosyl-[protein] + ATP = O-(5'-adenylyl)-L-tyrosyl-[protein] + diphosphate. The catalysed reaction is L-histidyl-[protein] + UTP = N(tele)-(5'-uridylyl)-L-histidyl-[protein] + diphosphate. It catalyses the reaction L-seryl-[protein] + UTP = O-(5'-uridylyl)-L-seryl-[protein] + diphosphate. It carries out the reaction L-tyrosyl-[protein] + UTP = O-(5'-uridylyl)-L-tyrosyl-[protein] + diphosphate. Its function is as follows. Nucleotidyltransferase involved in the post-translational modification of proteins. It can catalyze the addition of adenosine monophosphate (AMP) or uridine monophosphate (UMP) to a protein, resulting in modifications known as AMPylation and UMPylation. This Stutzerimonas stutzeri (strain A1501) (Pseudomonas stutzeri) protein is Protein nucleotidyltransferase YdiU.